Here is a 385-residue protein sequence, read N- to C-terminus: Spermidine/putrescine import ATP-binding protein PotA (385 aa).

The ABC transporter domain maps to 6–238 (IEFKNVSKVF…PINHFVATFI (233 aa)). 40-47 (GASGSGKS) serves as a coordination point for ATP.

It belongs to the ABC transporter superfamily. Spermidine/putrescine importer (TC 3.A.1.11.1) family. The complex is composed of two ATP-binding proteins (PotA), two transmembrane proteins (PotB and PotC) and a solute-binding protein (PotD).

Its subcellular location is the cell membrane. The catalysed reaction is ATP + H2O + polyamine-[polyamine-binding protein]Side 1 = ADP + phosphate + polyamineSide 2 + [polyamine-binding protein]Side 1.. In terms of biological role, part of the ABC transporter complex PotABCD involved in spermidine/putrescine import. Responsible for energy coupling to the transport system. The protein is Spermidine/putrescine import ATP-binding protein PotA of Streptococcus pneumoniae serotype 4 (strain ATCC BAA-334 / TIGR4).